We begin with the raw amino-acid sequence, 478 residues long: Glutamine synthetase (478 aa).

One can recognise a GS beta-grasp domain in the interval 16–100 (EKVEYVDVRF…INFFVHDPFT (85 aa)). The GS catalytic domain occupies 108 to 478 (PRNIARKAEN…PYEFALYYDV (371 aa)). Glu-133 and Glu-135 together coordinate Mg(2+). Glu-214 is an ATP binding site. Residues Glu-219 and Glu-227 each coordinate Mg(2+). 230–232 (YQF) contacts ATP. L-glutamate-binding positions include 271–272 (NG) and Gly-272. Residue His-276 coordinates Mg(2+). ATP-binding positions include 278-280 (HQS) and Ser-280. Residues Arg-329, Glu-335, and Arg-347 each contribute to the L-glutamate site. Arg-347, Arg-352, and Lys-361 together coordinate ATP. Position 366 (Glu-366) interacts with Mg(2+). Arg-368 serves as a coordination point for L-glutamate. Tyr-406 is modified (O-AMP-tyrosine).

The protein belongs to the glutamine synthetase family. As to quaternary structure, oligomer of 12 subunits arranged in the form of two hexagons. Mg(2+) is required as a cofactor.

It is found in the cytoplasm. It carries out the reaction L-glutamate + NH4(+) + ATP = L-glutamine + ADP + phosphate + H(+). With respect to regulation, when cellular nitrogen levels are high, the C-terminal adenylyl transferase (AT) of GlnE inhibits GlnA by covalent transfer of an adenylyl group from ATP to Tyr-406. Conversely, when nitrogen levels are low, the N-terminal adenylyl removase (AR) of GlnE activates GlnA by removing the adenylyl group by phosphorolysis. The fully adenylated enzyme complex is inactive. In terms of biological role, involved in nitrogen metabolism via ammonium assimilation. Catalyzes the ATP-dependent biosynthesis of glutamine from glutamate and ammonia. Also plays a key role in controlling the ammonia levels within infected host cells and so contributes to the pathogens capacity to inhibit phagosome acidification and phagosome-lysosome fusion. Involved in cell wall biosynthesis via the production of the major component poly-L-glutamine (PLG). PLG synthesis in the cell wall occurs only in nitrogen limiting conditions and on the contrary high nitrogen conditions inhibit PLG synthesis. The protein is Glutamine synthetase of Mycobacterium bovis (strain ATCC BAA-935 / AF2122/97).